The primary structure comprises 81 residues: Sec-independent protein translocase protein TatA (81 aa).

The chain crosses the membrane as a helical span at residues 1 to 21; the sequence is MGSLSLWHWIIVGAVLLLLFG. The segment at 41–81 is disordered; that stretch reads KKGLSEDDEKPEAARPAEPARSLDHQPVAEQPKVSETHRIG.

The protein belongs to the TatA/E family. The Tat system comprises two distinct complexes: a TatABC complex, containing multiple copies of TatA, TatB and TatC subunits, and a separate TatA complex, containing only TatA subunits. Substrates initially bind to the TatABC complex, which probably triggers association of the separate TatA complex to form the active translocon.

Its subcellular location is the cell inner membrane. In terms of biological role, part of the twin-arginine translocation (Tat) system that transports large folded proteins containing a characteristic twin-arginine motif in their signal peptide across membranes. TatA could form the protein-conducting channel of the Tat system. The polypeptide is Sec-independent protein translocase protein TatA (Beijerinckia indica subsp. indica (strain ATCC 9039 / DSM 1715 / NCIMB 8712)).